The following is a 345-amino-acid chain: S-adenosylmethionine:tRNA ribosyltransferase-isomerase (345 aa).

Belongs to the QueA family. As to quaternary structure, monomer.

The protein localises to the cytoplasm. The catalysed reaction is 7-aminomethyl-7-carbaguanosine(34) in tRNA + S-adenosyl-L-methionine = epoxyqueuosine(34) in tRNA + adenine + L-methionine + 2 H(+). Its pathway is tRNA modification; tRNA-queuosine biosynthesis. Functionally, transfers and isomerizes the ribose moiety from AdoMet to the 7-aminomethyl group of 7-deazaguanine (preQ1-tRNA) to give epoxyqueuosine (oQ-tRNA). The protein is S-adenosylmethionine:tRNA ribosyltransferase-isomerase of Shewanella pealeana (strain ATCC 700345 / ANG-SQ1).